We begin with the raw amino-acid sequence, 170 residues long: Translocator protein 2 (170 aa).

The next 5 membrane-spanning stretches (helical) occupy residues 3–23, 45–65, 78–98, 104–124, and 130–150; these read LQGA…WLFT, VLLL…YLVW, LPLG…VLFF, GLAL…ALIW, and LAAL…ALTY.

Belongs to the TspO/BZRP family. As to quaternary structure, homotetramer. May also form homodimer. In terms of tissue distribution, expressed in erythrocytes (at protein level).

It localises to the endoplasmic reticulum membrane. The protein localises to the cell membrane. Its function is as follows. Cholesterol-binding protein involved in the redistribution of cholesterol from lipid droplets to the endoplasmic reticulum. Required to meet cholesterol demands during erythropoietic differentiation. May play a role in transport processes at the plasma membrane of erythrocytes, including regulating VDAC-mediated ATP export, and import of the heme precursors protoporphyrin IX and 5-aminolevulinic acid. The polypeptide is Translocator protein 2 (TSPO2) (Homo sapiens (Human)).